Consider the following 901-residue polypeptide: MTTQLNINSVIENAKRVITPLSPISIFAARNPWEGLEADTFEDVAKWLRDVRDVDIFPNKALIESAVARGELDESVFNQLVTDMLLEHHYNIPQHYINLYIDNIKTLKDVPASYMNHSNVDVVADLLLEKSKRDMAESYHHYDVRPMSDAIIDEQGEPLSEQVNRQMIKWTKLYIDQFLSSWTMPKREQSFYHAWLHLAQHDHSFTKAQRQVIKGLPNDPEMTIESVLTHFSIDQEDYQAYVEGHLLALPGWAGMLYYRSQQHYFEQHLLTDYLAIRLVVEQLLVGDEFKSVAKDCESRSENWFKQTVASWCYYSDMPSDVLLQHDVNEIQTFIHFAATMNKNVFKNLWLIAWEMTYESQLKQKIKAGHESVAGALDVNQVNVSENDNANQPHSVLLNDTQAVDENNSELNQMGTSTKAQIAFCIDVRSEPFRRHIEAAGPFETIGIAGFFGLPIQKDAVDEQFKHDSLPVMVPPAYRIKEFADRYDMNVYRQQQQTMSSMFYTFKLMKNNVMPSLLLPELSGPFLSLSTIVNSIMPRKSRASLQKIKQKWLKKPETKLTIDREFDRTSDLPVGFTEQEQIDFALQALKLMDLTEAFAPFVVLAGHASHSHNNPHHASLECGACGGASSGFNAKLLAMICNRPNVRQGLKQSGVYIPETTVFAVAEHHTSTDTLAWVYVPDTLSSIALDAYESLNDAMPMISEHANRERLDKLPTIGRVNHPVEEAQRFASDWSEVRPEWGLAKNASFIIGRRQLTKGIDLEGRTFLHNYDWRKDKDGTLLNTIISGPALVAQWINLQYYASTVAPHFYGSGNKATQTVTSGVGVMQGNASDLMYGLSWQSVMAADRTMYHSPIRLLVVIQAPDYVVARLLANNEHFARKVSNHWLRLMSVNEEGRFKSWI.

Zn(2+)-binding residues include Cys-424, Asp-426, His-606, and Cys-621.

This sequence belongs to the inorganic carbon transporter (TC 9.A.2) DabA family. Forms a complex with DabB. The cofactor is Zn(2+).

It is found in the cell membrane. Its function is as follows. Part of an energy-coupled inorganic carbon pump. This chain is Probable inorganic carbon transporter subunit DabA, found in Staphylococcus aureus (strain USA300).